The primary structure comprises 203 residues: Dephospho-CoA kinase (203 aa).

The region spanning 5-203 (IVGLTGGIAS…VVYRVAASEH (199 aa)) is the DPCK domain. ATP is bound at residue 13 to 18 (ASGKSA).

Belongs to the CoaE family.

It localises to the cytoplasm. It carries out the reaction 3'-dephospho-CoA + ATP = ADP + CoA + H(+). The protein operates within cofactor biosynthesis; coenzyme A biosynthesis; CoA from (R)-pantothenate: step 5/5. Catalyzes the phosphorylation of the 3'-hydroxyl group of dephosphocoenzyme A to form coenzyme A. The protein is Dephospho-CoA kinase of Xanthomonas euvesicatoria pv. vesicatoria (strain 85-10) (Xanthomonas campestris pv. vesicatoria).